The primary structure comprises 81 residues: Sec-independent protein translocase protein TatA (81 aa).

A helical transmembrane segment spans residues 1–21 (MGSLSLWHWIIVGAVLLLLFG). Residues 41–81 (KKGLSEDDEKPEAARPAEPARSLDHQPVAEQPKVSETHRIG) form a disordered region.

This sequence belongs to the TatA/E family. As to quaternary structure, the Tat system comprises two distinct complexes: a TatABC complex, containing multiple copies of TatA, TatB and TatC subunits, and a separate TatA complex, containing only TatA subunits. Substrates initially bind to the TatABC complex, which probably triggers association of the separate TatA complex to form the active translocon.

It is found in the cell inner membrane. Its function is as follows. Part of the twin-arginine translocation (Tat) system that transports large folded proteins containing a characteristic twin-arginine motif in their signal peptide across membranes. TatA could form the protein-conducting channel of the Tat system. This is Sec-independent protein translocase protein TatA from Beijerinckia indica subsp. indica (strain ATCC 9039 / DSM 1715 / NCIMB 8712).